The chain runs to 506 residues: Ribose import ATP-binding protein RbsA (506 aa).

2 ABC transporter domains span residues 5–237 (VQLI…VGRP) and 249–492 (PFGA…LAIE). Residue 37–44 (GENGAGKS) participates in ATP binding.

This sequence belongs to the ABC transporter superfamily. Ribose importer (TC 3.A.1.2.1) family. The complex is composed of an ATP-binding protein (RbsA), two transmembrane proteins (RbsC) and a solute-binding protein (RbsB).

It localises to the cell inner membrane. It catalyses the reaction D-ribose(out) + ATP + H2O = D-ribose(in) + ADP + phosphate + H(+). Its function is as follows. Part of the ABC transporter complex RbsABC involved in ribose import. Responsible for energy coupling to the transport system. This chain is Ribose import ATP-binding protein RbsA, found in Chelativorans sp. (strain BNC1).